The following is a 1233-amino-acid chain: Structural maintenance of chromosomes protein 1A (1233 aa).

32-39 contacts ATP; sequence GPNGSGKS. 2 coiled-coil regions span residues 104-124 and 163-503; these read EYKI…LEKL and ELAQ…KAEI. Residues 284–293 are compositionally biased toward basic and acidic residues; that stretch reads IKEKDSELNQ. 2 disordered regions span residues 284-308 and 348-369; these read IKEK…TSHK and QEFE…TLEE. Residues Ser-358 and Ser-360 each carry the phosphoserine modification. Residues 515-629 enclose the SMC hinge domain; that stretch reads VYGRLIDLCQ…DNVEDARRIA (115 aa). N6-acetyllysine occurs at positions 648 and 713. The stretch at 660-935 forms a coiled coil; it reads KAKARRWDEK…RHNLLQACKM (276 aa). Residues 947 to 966 are disordered; it reads MDDISQEEGSSQGEDSVSGS. Over residues 953–966 the composition is skewed to low complexity; it reads EEGSSQGEDSVSGS. Ser-957 carries the phosphoserine; by ATM modification. Position 962 is a phosphoserine (Ser-962). Phosphoserine; by ATM and ATR is present on Ser-966. Position 970 is a phosphoserine (Ser-970). A coiled-coil region spans residues 991–1068; it reads KDAQAEEEIK…FEQIKKERFD (78 aa). Position 1037 is an N6-acetyllysine (Lys-1037).

Belongs to the SMC family. SMC1 subfamily. In terms of assembly, forms a heterodimer with SMC3 in cohesin complexes. Cohesin complexes are composed of the SMC1 (SMC1A or SMC1B) and SMC3 heterodimer attached via their SMC hinge domain, RAD21 which link them, and one STAG protein (STAG1, STAG2 or STAG3), which interacts with RAD21. In germ cell cohesin complexes, SMC1A is mutually exclusive with SMC1B. Interacts with BRCA1. Found in a complex with CDCA5, SMC3 and RAD21, PDS5A/SCC-112 and PDS5B/APRIN. Interacts with NDC80. Interacts with BRAT1. Found in a complex containing POLE and SMC3. Interacts with RPGR, STAG3 and SYCP2. The cohesin complex interacts with the cohesin loading complex subunits NIPBL/Scc2 (via HEAT repeats) and MAU2/Scc4. NIPBL directly contacts all members of the complex, RAD21, SMC1A/B, SMC3 and STAG1. In terms of processing, ubiquitinated by the DCX(DCAF15) complex, leading to its degradation. Post-translationally, phosphorylated by ATM upon ionizing radiation in a NBS1-dependent manner. Phosphorylated by ATR upon DNA methylation in a MSH2/MSH6-dependent manner. Phosphorylation of Ser-957 and Ser-966 activates it and is required for S-phase checkpoint activation.

The protein resides in the nucleus. The protein localises to the chromosome. It is found in the centromere. It localises to the kinetochore. Involved in chromosome cohesion during cell cycle and in DNA repair. Central component of cohesin complex. The cohesin complex is required for the cohesion of sister chromatids after DNA replication. The cohesin complex apparently forms a large proteinaceous ring within which sister chromatids can be trapped. At anaphase, the complex is cleaved and dissociates from chromatin, allowing sister chromatids to segregate. The cohesin complex may also play a role in spindle pole assembly during mitosis. Involved in DNA repair via its interaction with BRCA1 and its related phosphorylation by ATM, or via its phosphorylation by ATR. Works as a downstream effector both in the ATM/NBS1 branch and in the ATR/MSH2 branch of S-phase checkpoint. The chain is Structural maintenance of chromosomes protein 1A (SMC1A) from Homo sapiens (Human).